We begin with the raw amino-acid sequence, 301 residues long: ADP-ribosyl cyclase/cyclic ADP-ribose hydrolase 1 (301 aa).

Topologically, residues 1 to 21 (MANCEFSPVSGDKPCCRLSRR) are cytoplasmic. The chain crosses the membrane as a helical; Signal-anchor for type II membrane protein span at residues 22 to 43 (AQVCLGVCLLVLLILVVVVAVV). Over 44–301 (LPRWRQQWSG…PEDSSCLSGI (258 aa)) the chain is Extracellular. 3 cysteine pairs are disulfide-bonded: Cys-68-Cys-83, Cys-100-Cys-181, and Cys-161-Cys-174. The N-linked (GlcNAc...) asparagine glycan is linked to Asn-101. Residue Cys-120 is part of the active site. Asn-121 carries N-linked (GlcNAc...) asparagine glycosylation. Residue Cys-202 is part of the active site. 2 N-linked (GlcNAc...) asparagine glycosylation sites follow: Asn-210 and Asn-220. 2 cysteine pairs are disulfide-bonded: Cys-255/Cys-276 and Cys-288/Cys-297.

It belongs to the ADP-ribosyl cyclase family. As to quaternary structure, homodimer.

The protein resides in the cell surface. The protein localises to the membrane. It catalyses the reaction NAD(+) = cyclic ADP-beta-D-ribose + nicotinamide + H(+). The enzyme catalyses 2'-phospho-cyclic ADP-ribose + nicotinate = nicotinate-adenine dinucleotide phosphate. The catalysed reaction is NAD(+) + H2O = ADP-D-ribose + nicotinamide + H(+). It carries out the reaction nicotinate + NADP(+) = nicotinate-adenine dinucleotide phosphate + nicotinamide. With respect to regulation, ATP inhibits the cADPR hydrolyzing activity. Synthesizes cyclic ADP-ribose (cADPR), a second messenger for glucose-induced insulin secretion. Synthesizes the Ca(2+) mobilizer nicotinate-adenine dinucleotide phosphate, NAADP(+), from 2'-phospho-cADPR and nicotinic acid, as well as from NADP(+) and nicotinic acid. Also has cADPR hydrolase activity. The polypeptide is ADP-ribosyl cyclase/cyclic ADP-ribose hydrolase 1 (CD38) (Macaca fascicularis (Crab-eating macaque)).